Here is a 151-residue protein sequence, read N- to C-terminus: UPF0178 protein ESA_02916 (151 aa).

This sequence belongs to the UPF0178 family.

This is UPF0178 protein ESA_02916 from Cronobacter sakazakii (strain ATCC BAA-894) (Enterobacter sakazakii).